Here is a 441-residue protein sequence, read N- to C-terminus: Glutamate--tRNA ligase 1 (441 aa).

The 'HIGH' region motif lies at 7 to 17 (PSPTGYMHIGN). The short motif at 236–240 (KMSKR) is the 'KMSKS' region element. K239 contributes to the ATP binding site.

The protein belongs to the class-I aminoacyl-tRNA synthetase family. Glutamate--tRNA ligase type 1 subfamily. Monomer.

Its subcellular location is the cytoplasm. The catalysed reaction is tRNA(Glu) + L-glutamate + ATP = L-glutamyl-tRNA(Glu) + AMP + diphosphate. Functionally, catalyzes the attachment of glutamate to tRNA(Glu) in a two-step reaction: glutamate is first activated by ATP to form Glu-AMP and then transferred to the acceptor end of tRNA(Glu). The polypeptide is Glutamate--tRNA ligase 1 (Anaplasma marginale (strain St. Maries)).